Consider the following 460-residue polypeptide: 3-ketoacyl-CoA synthase 7 (460 aa).

The chain crosses the membrane as a helical span at residues 21–41 (FHQFLVASACVLIAVFGYYFF). An FAE domain is found at 38 to 328 (YYFFKPRCII…YIISFIQRKW (291 aa)). Residues Cys-183, His-262, His-345, His-349, and Asn-382 contribute to the active site.

The protein belongs to the thiolase-like superfamily. Chalcone/stilbene synthases family. Expressed in flowers.

The protein resides in the membrane. The enzyme catalyses a very-long-chain acyl-CoA + malonyl-CoA + H(+) = a very-long-chain 3-oxoacyl-CoA + CO2 + CoA. It functions in the pathway lipid metabolism; fatty acid biosynthesis. This is 3-ketoacyl-CoA synthase 7 from Arabidopsis thaliana (Mouse-ear cress).